We begin with the raw amino-acid sequence, 313 residues long: Olfactory receptor 1f45 (313 aa).

Residues 1-25 (MSSTNQSSVTEFLLLGLSRQPQQQQ) are Extracellular-facing. A glycan (N-linked (GlcNAc...) asparagine) is linked at N5. Residues 26 to 50 (LLFLLFLIMYLATVLGNLLIILAIG) traverse the membrane as a helical segment. At 51–57 (TDSRLHT) the chain is on the cytoplasmic side. A helical membrane pass occupies residues 58–79 (PMYFFLSNLSFVDVCFSSTTVP). Over 80–100 (KVLANHILGSQAISFSGCLTQ) the chain is Extracellular. C97 and C189 are disulfide-bonded. The chain crosses the membrane as a helical span at residues 101–120 (LYFLAVFGNMDNFLLAVMSY). Residues 121 to 139 (DRFVAICHPLHYTTKMTRQ) lie on the Cytoplasmic side of the membrane. A helical membrane pass occupies residues 140-158 (LCVLLVVGSWVVANMNCLL). Residues 159–196 (HILLMARLSFCADNMIPHFFCDGTPLLKLSCSDTHLNE) lie on the Extracellular side of the membrane. Residues 197–219 (LMILTEGAVVMVTPFVCILISYI) form a helical membrane-spanning segment. The Cytoplasmic segment spans residues 220 to 236 (HITCAVLRVSSPRGGWK). A helical membrane pass occupies residues 237-260 (SFSTCGSHLAVVCLFYGTVIAVYF). At 261-272 (NPSSSHLAGRDM) the chain is on the extracellular side. The helical transmembrane segment at 273 to 292 (AAAVMYAVVTPMLNPFIYSL) threads the bilayer. Residues 293–313 (RNSDMKAALRKVLAMRFPSKQ) lie on the Cytoplasmic side of the membrane.

This sequence belongs to the G-protein coupled receptor 1 family. In terms of tissue distribution, olfactory epithelium.

The protein localises to the cell membrane. Odorant receptor. This Rattus norvegicus (Rat) protein is Olfactory receptor 1f45 (Or1f45).